Consider the following 881-residue polypeptide: Receptor-like protein 41 (881 aa).

The signal sequence occupies residues Met1–Pro21. Over Ser22–Glu844 the chain is Extracellular. Asn58, Asn70, Asn91, Asn109, and Asn145 each carry an N-linked (GlcNAc...) asparagine glycan. 16 LRR repeats span residues Phe97–Met121, Leu122–Asn145, Leu146–Leu169, Arg170–Leu195, His197–Asn219, Leu220–Leu244, Thr245–Leu267, Thr268–Met291, Phe293–Ser317, Leu319–Leu340, Asn342–Ser364, Phe365–Ser390, Leu391–Ser412, Leu413–Leu437, Arg439–Asn462, and Ser463–Ile486. Asn189 is a glycosylation site (N-linked (GlcNAc...) asparagine). N-linked (GlcNAc...) asparagine glycans are attached at residues Asn243 and Asn266. Residues Asn305 and Asn312 are each glycosylated (N-linked (GlcNAc...) asparagine). N-linked (GlcNAc...) asparagine glycosylation occurs at Asn402. An N-linked (GlcNAc...) asparagine glycan is attached at Asn462. The LRR 17; degenerate repeat unit spans residues Ile487–Asn506. N-linked (GlcNAc...) asparagine glycans are attached at residues Asn506 and Asn519. 10 LRR repeats span residues Arg507 to Leu528, Ser529 to Asp552, Pro554 to Cys576, Ala578 to Val599, Leu600 to Ser624, Phe627 to Asn651, Thr701 to Leu724, Lys725 to Leu748, Val749 to Leu772, and Phe774 to Gly797. N-linked (GlcNAc...) asparagine glycosylation occurs at Asn575. The N-linked (GlcNAc...) asparagine glycan is linked to Asn731. Asn779 carries an N-linked (GlcNAc...) asparagine glycan. The chain crosses the membrane as a helical span at residues Gly845–Ala865. The Cytoplasmic portion of the chain corresponds to Ser866–Arg881.

Belongs to the RLP family.

The protein resides in the cell membrane. In terms of biological role, may be involved in ABA-induced senescence responses. This chain is Receptor-like protein 41, found in Arabidopsis thaliana (Mouse-ear cress).